The sequence spans 34 residues: MFNWNIVAQLLSLALVTLSGPAVIFLLYFKRGNL.

Residues 6-26 form a helical membrane-spanning segment; that stretch reads IVAQLLSLALVTLSGPAVIFL.

This sequence belongs to the Psb30/Ycf12 family. As to quaternary structure, PSII is composed of 1 copy each of membrane proteins PsbA, PsbB, PsbC, PsbD, PsbE, PsbF, PsbH, PsbI, PsbJ, PsbK, PsbL, PsbM, PsbT, PsbX, PsbY, PsbZ, Psb30/Ycf12, peripheral proteins of the oxygen-evolving complex and a large number of cofactors. It forms dimeric complexes.

It is found in the plastid. The protein localises to the chloroplast thylakoid membrane. Its function is as follows. A core subunit of photosystem II (PSII), probably helps stabilize the reaction center. The protein is Photosystem II reaction center protein Psb30 of Emiliania huxleyi (Coccolithophore).